Reading from the N-terminus, the 229-residue chain is Transmembrane protein 217 (229 aa).

Residues 13–33 (MGTVLSGVFTIMAVDMYLIFE) traverse the membrane as a helical segment. The N-linked (GlcNAc...) asparagine glycan is linked to Asn-39. The next 3 helical transmembrane spans lie at 67 to 87 (IVLF…YSVY), 94 to 114 (LVIY…IQIL), and 129 to 149 (WFGL…VINY). Asn-156 is a glycosylation site (N-linked (GlcNAc...) asparagine).

Its subcellular location is the membrane. The protein is Transmembrane protein 217 (TMEM217) of Homo sapiens (Human).